We begin with the raw amino-acid sequence, 316 residues long: SHC-transforming protein homolog 1 (316 aa).

Residues 16–158 (GVSLSATYLG…LIDVLTTAIN (143 aa)) form the PID domain. The SH2 domain maps to 211–307 (WYHGNLSRED…ETSLNLIRPV (97 aa)). The tract at residues 292 to 316 (SEGRDRETSLNLIRPVPCPGSDDIE) is disordered.

In terms of assembly, interacts (via PID domain) with daf-2 (via cytoplasmic domain). Interacts with mek-1; the interaction is independent of mek-1 catalytic activity and is constitutive. Interacts (via N-terminus) with mlk-1 (via NPQY motif when phosphorylated on tyrosine residue). Does not interact with jkk-1 or sek-1. Interacts (via SH2 domain) with svh-2. Interacts with svh-4. As to expression, expressed in hypodermis, intestine, head and tail neurons, pharynx, gonads, vulva and body muscles.

The protein localises to the cytoplasm. The protein resides in the nucleus. Its subcellular location is the cell membrane. Functionally, scaffold protein which plays an important role in the activation of the JNK pathway composed of mlk-1, mek-1 and kgb-1; by bringing together mek-1 and mlk-1, promotes mlk-1-mediated phosphorylation and activation of mek-1 which in turn phosphorylates kgb-1. In addition, negatively modulates the activation of the insulin/IGF-1-like signaling (IIS) probably by inhibiting the insulin receptor daf-2. Positively regulates the activity of the transcription factor daf-16/FOXO by both inhibiting IIS and activating the JNK pathway. Plays a role in maintaining gonadal basement membrane integrity through activation of the JNK pathway components mek-1 and jnk-1. Involved in the response to several environmental stresses including heavy metal ions (Cu(2+) and Cd(2+)), heat, oxidative and protein misfolding (ER) stresses. Plays a role in gonad and germline development following the L1 diapause. Plays a role in life span and egg laying. Plays a role in axon regeneration after injury. In Caenorhabditis elegans, this protein is SHC-transforming protein homolog 1.